Reading from the N-terminus, the 592-residue chain is Serine/threonine-protein kinase ksg1 (592 aa).

Polar residues predominate over residues 1 to 10 (MRNTHNPNET). The segment at 1 to 92 (MRNTHNPNET…NPSSGASTPN (92 aa)) is disordered. Over residues 11 to 22 (EASEDAENDTQS) the composition is skewed to acidic residues. Over residues 27–37 (SFDHGSSEKLN) the composition is skewed to basic and acidic residues. Residues 42–68 (PKTQNSAIPQSNALNTTPNESTSQIDS) are compositionally biased toward polar residues. Phosphoserine is present on residues S64 and S69. Over residues 80-92 (STPNPSSGASTPN) the composition is skewed to polar residues. Residues 99–366 (FKFGEILGEG…VDEIHQHPFF (268 aa)) form the Protein kinase domain. ATP is bound by residues 109 to 111 (SYS) and K128. Residues 130–175 (LDKRHIIKEKKEKYVNIEKEALCILSKHPGFIKLFYTFQDAHNLYF) are PIF-pocket. ATP-binding positions include 178-180 (SLA) and E184. D223 acts as the Proton acceptor in catalysis. ATP contacts are provided by E227 and D241. Residues 461 to 572 (ISKIGTLNVY…ELLDKASSIS (112 aa)) form the PH domain.

This sequence belongs to the protein kinase superfamily. AGC Ser/Thr protein kinase family. PDPK1 subfamily.

The protein resides in the cytoplasm. The enzyme catalyses L-seryl-[protein] + ATP = O-phospho-L-seryl-[protein] + ADP + H(+). The catalysed reaction is L-threonyl-[protein] + ATP = O-phospho-L-threonyl-[protein] + ADP + H(+). Involved in the control of sexual development and cell growth under stressed conditions. Phosphorylates AGC kinase gad8 at 'Thr-387', activating gad8 kinase activity and promoting sexual development. Phosphorylates AGC kinase psk1 at 'Ser-248', activating psk1 kinase activity and promoting phosphorylation of ribosomal protein S6. The protein is Serine/threonine-protein kinase ksg1 of Schizosaccharomyces pombe (strain 972 / ATCC 24843) (Fission yeast).